We begin with the raw amino-acid sequence, 206 residues long: Putative precorrin-2 dehydrogenase (206 aa).

NAD(+) contacts are provided by residues 20–21 and 41–46; these read SV and KEFDEE.

Belongs to the precorrin-2 dehydrogenase / sirohydrochlorin ferrochelatase family. Homodimer.

The catalysed reaction is precorrin-2 + NAD(+) = sirohydrochlorin + NADH + 2 H(+). It participates in porphyrin-containing compound metabolism; siroheme biosynthesis; sirohydrochlorin from precorrin-2: step 1/1. Its function is as follows. Involved in the archaeal biosynthesis of heme. Catalyzes the oxiation of precorrin-2 into sirohydroclorin. The polypeptide is Putative precorrin-2 dehydrogenase (Methanocaldococcus jannaschii (strain ATCC 43067 / DSM 2661 / JAL-1 / JCM 10045 / NBRC 100440) (Methanococcus jannaschii)).